Here is a 276-residue protein sequence, read N- to C-terminus: Formamidopyrimidine-DNA glycosylase (276 aa).

The active-site Schiff-base intermediate with DNA is Pro2. The active-site Proton donor is Glu3. The active-site Proton donor; for beta-elimination activity is the Lys58. DNA-binding residues include His94, Arg112, and Arg157. An FPG-type zinc finger spans residues 242-276 (FVYDRAGQPCRVCGTPIKQIVQGQRSTYYCPTCQR). The active-site Proton donor; for delta-elimination activity is Arg266.

The protein belongs to the FPG family. Monomer. Zn(2+) is required as a cofactor.

It catalyses the reaction Hydrolysis of DNA containing ring-opened 7-methylguanine residues, releasing 2,6-diamino-4-hydroxy-5-(N-methyl)formamidopyrimidine.. It carries out the reaction 2'-deoxyribonucleotide-(2'-deoxyribose 5'-phosphate)-2'-deoxyribonucleotide-DNA = a 3'-end 2'-deoxyribonucleotide-(2,3-dehydro-2,3-deoxyribose 5'-phosphate)-DNA + a 5'-end 5'-phospho-2'-deoxyribonucleoside-DNA + H(+). Involved in base excision repair of DNA damaged by oxidation or by mutagenic agents. Acts as a DNA glycosylase that recognizes and removes damaged bases. Has a preference for oxidized purines, such as 7,8-dihydro-8-oxoguanine (8-oxoG). Has AP (apurinic/apyrimidinic) lyase activity and introduces nicks in the DNA strand. Cleaves the DNA backbone by beta-delta elimination to generate a single-strand break at the site of the removed base with both 3'- and 5'-phosphates. This chain is Formamidopyrimidine-DNA glycosylase, found in Paraburkholderia phymatum (strain DSM 17167 / CIP 108236 / LMG 21445 / STM815) (Burkholderia phymatum).